The chain runs to 333 residues: MKNKYNLLFFLFLLCYGDVALAACTGKLKISPGYSGHTYSFDSSIPNNSNIARYLVEISEKIVCDADQSGWDGKRYAQLHLYSSGALCESVSGDGITFRSNVSGLSWRFPNGIPYHCAAGQINLGGIKYADRNGKVTWNPGELRHEIFLRVDNRFDFSKSRTFSVNTISGRGGLGGDSSVVIPLIGSSFNYSYSNIATCTLTGPSEVNFNTVTTSDVLKGTTHRDLNLRAECRNRGASLGLNFKFEPQYKDVSANKQGVFYAKNTSGSLTYKLTKKADASAIPLNEFVKLIVEDKVNIHTGNTIPLLLTLQKGDGKIATGKIETFLNVTMEHM.

The N-terminal stretch at 1–22 (MKNKYNLLFFLFLLCYGDVALA) is a signal peptide.

In terms of processing, three disulfide bonds are present.

It localises to the fimbrium. Functionally, minor component of K99 fimbriae. Is not required for binding of K99 fimbriae to the ganglioside receptor. May play a role in initiation, elongation and flexibility of the fimbriae. The polypeptide is Protein FanF (fanF) (Escherichia coli).